Reading from the N-terminus, the 185-residue chain is Threonylcarbamoyl-AMP synthase (185 aa).

The region spanning 4 to 185 (SWRVQQAARE…LATGNIVRPA (182 aa)) is the YrdC-like domain.

Belongs to the SUA5 family. TsaC subfamily.

It localises to the cytoplasm. The catalysed reaction is L-threonine + hydrogencarbonate + ATP = L-threonylcarbamoyladenylate + diphosphate + H2O. Required for the formation of a threonylcarbamoyl group on adenosine at position 37 (t(6)A37) in tRNAs that read codons beginning with adenine. Catalyzes the conversion of L-threonine, HCO(3)(-)/CO(2) and ATP to give threonylcarbamoyl-AMP (TC-AMP) as the acyladenylate intermediate, with the release of diphosphate. The polypeptide is Threonylcarbamoyl-AMP synthase (Pseudomonas fluorescens (strain Pf0-1)).